The primary structure comprises 360 residues: 1-deoxy-D-xylulose 5-phosphate reductoisomerase (360 aa).

5 residues coordinate NADPH: serine 7, glycine 8, serine 9, isoleucine 10, and asparagine 115. Lysine 116 lines the 1-deoxy-D-xylulose 5-phosphate pocket. Residue glutamate 117 coordinates NADPH. Position 135 (aspartate 135) interacts with Mn(2+). 1-deoxy-D-xylulose 5-phosphate-binding residues include serine 136, glutamate 137, serine 159, and histidine 182. Glutamate 137 lines the Mn(2+) pocket. NADPH is bound at residue glycine 188. 1-deoxy-D-xylulose 5-phosphate contacts are provided by serine 195, asparagine 200, lysine 201, and glutamate 204. Mn(2+) is bound at residue glutamate 204.

This sequence belongs to the DXR family. Mg(2+) serves as cofactor. It depends on Mn(2+) as a cofactor.

The catalysed reaction is 2-C-methyl-D-erythritol 4-phosphate + NADP(+) = 1-deoxy-D-xylulose 5-phosphate + NADPH + H(+). It participates in isoprenoid biosynthesis; isopentenyl diphosphate biosynthesis via DXP pathway; isopentenyl diphosphate from 1-deoxy-D-xylulose 5-phosphate: step 1/6. Catalyzes the NADPH-dependent rearrangement and reduction of 1-deoxy-D-xylulose-5-phosphate (DXP) to 2-C-methyl-D-erythritol 4-phosphate (MEP). This Campylobacter fetus subsp. fetus (strain 82-40) protein is 1-deoxy-D-xylulose 5-phosphate reductoisomerase.